The sequence spans 464 residues: ATP synthase subunit beta 2 (464 aa).

153-160 (GGAGVGKT) contacts ATP.

It belongs to the ATPase alpha/beta chains family. As to quaternary structure, F-type ATPases have 2 components, CF(1) - the catalytic core - and CF(0) - the membrane proton channel. CF(1) has five subunits: alpha(3), beta(3), gamma(1), delta(1), epsilon(1). CF(0) has three main subunits: a(1), b(2) and c(9-12). The alpha and beta chains form an alternating ring which encloses part of the gamma chain. CF(1) is attached to CF(0) by a central stalk formed by the gamma and epsilon chains, while a peripheral stalk is formed by the delta and b chains.

Its subcellular location is the cell inner membrane. It catalyses the reaction ATP + H2O + 4 H(+)(in) = ADP + phosphate + 5 H(+)(out). In terms of biological role, produces ATP from ADP in the presence of a proton gradient across the membrane. The catalytic sites are hosted primarily by the beta subunits. In Paraburkholderia xenovorans (strain LB400), this protein is ATP synthase subunit beta 2.